Consider the following 432-residue polypeptide: Serine/threonine-protein phosphatase 2A activator 1 (432 aa).

The tract at residues 322–432 (PYSKVEDEEP…MAPTKAPWAK (111 aa)) is disordered. The span at 366–389 (TVERLARRDGQRAAREKEEREDRA) shows a compositional bias: basic and acidic residues. Residues 396–412 (TTGAPGATALPPTRAPG) are compositionally biased toward low complexity.

It belongs to the PTPA-type PPIase family.

The protein resides in the cytoplasm. Its subcellular location is the nucleus. The enzyme catalyses [protein]-peptidylproline (omega=180) = [protein]-peptidylproline (omega=0). In terms of biological role, PPIases accelerate the folding of proteins. It catalyzes the cis-trans isomerization of proline imidic peptide bonds in oligopeptides. Acts as a regulatory subunit for PP2A-like phosphatases modulating their activity or substrate specificity, probably by inducing a conformational change in the catalytic subunit, a direct target of the PPIase. Can reactivate inactive phosphatase PP2A-phosphatase methylesterase complexes (PP2Ai) in presence of ATP and Mg(2+) by dissociating the inactive form from the complex. The chain is Serine/threonine-protein phosphatase 2A activator 1 (RRD1) from Yarrowia lipolytica (strain CLIB 122 / E 150) (Yeast).